Consider the following 311-residue polypeptide: 4-hydroxy-3-methylbut-2-enyl diphosphate reductase (311 aa).

Cys12 serves as a coordination point for [4Fe-4S] cluster. Residues His41 and His74 each contribute to the (2E)-4-hydroxy-3-methylbut-2-enyl diphosphate site. His41 and His74 together coordinate dimethylallyl diphosphate. The isopentenyl diphosphate site is built by His41 and His74. A [4Fe-4S] cluster-binding site is contributed by Cys96. (2E)-4-hydroxy-3-methylbut-2-enyl diphosphate is bound at residue His124. Residue His124 participates in dimethylallyl diphosphate binding. His124 is an isopentenyl diphosphate binding site. Glu126 (proton donor) is an active-site residue. Position 167 (Thr167) interacts with (2E)-4-hydroxy-3-methylbut-2-enyl diphosphate. A [4Fe-4S] cluster-binding site is contributed by Cys197. (2E)-4-hydroxy-3-methylbut-2-enyl diphosphate is bound by residues Ser225, Ser226, Asn227, and Ser269. 4 residues coordinate dimethylallyl diphosphate: Ser225, Ser226, Asn227, and Ser269. Isopentenyl diphosphate-binding residues include Ser225, Ser226, Asn227, and Ser269.

It belongs to the IspH family. The cofactor is [4Fe-4S] cluster.

It catalyses the reaction isopentenyl diphosphate + 2 oxidized [2Fe-2S]-[ferredoxin] + H2O = (2E)-4-hydroxy-3-methylbut-2-enyl diphosphate + 2 reduced [2Fe-2S]-[ferredoxin] + 2 H(+). The catalysed reaction is dimethylallyl diphosphate + 2 oxidized [2Fe-2S]-[ferredoxin] + H2O = (2E)-4-hydroxy-3-methylbut-2-enyl diphosphate + 2 reduced [2Fe-2S]-[ferredoxin] + 2 H(+). It participates in isoprenoid biosynthesis; dimethylallyl diphosphate biosynthesis; dimethylallyl diphosphate from (2E)-4-hydroxy-3-methylbutenyl diphosphate: step 1/1. It functions in the pathway isoprenoid biosynthesis; isopentenyl diphosphate biosynthesis via DXP pathway; isopentenyl diphosphate from 1-deoxy-D-xylulose 5-phosphate: step 6/6. Catalyzes the conversion of 1-hydroxy-2-methyl-2-(E)-butenyl 4-diphosphate (HMBPP) into a mixture of isopentenyl diphosphate (IPP) and dimethylallyl diphosphate (DMAPP). Acts in the terminal step of the DOXP/MEP pathway for isoprenoid precursor biosynthesis. This Aeromonas salmonicida (strain A449) protein is 4-hydroxy-3-methylbut-2-enyl diphosphate reductase.